The following is a 147-amino-acid chain: Large ribosomal subunit protein uL15 (147 aa).

Positions 1-58 (MKLFELKPAPGAKKRPKRVGRGESSGHGKTSTRGHKGQWARSGGGVRPGFEGGQMPLT) are disordered. Residues 42-52 (SGGGVRPGFEG) show a composition bias toward gly residues.

Belongs to the universal ribosomal protein uL15 family. Part of the 50S ribosomal subunit.

In terms of biological role, binds to the 23S rRNA. This is Large ribosomal subunit protein uL15 from Caldicellulosiruptor saccharolyticus (strain ATCC 43494 / DSM 8903 / Tp8T 6331).